Reading from the N-terminus, the 226-residue chain is E3 ubiquitin-protein ligase RNF186 (226 aa).

The segment at 39 to 85 (CLVCREPYSGVRPPKLLGCQHAFCAVCLKLLLCVQDDAWSIPCPLCR) adopts an RING-type zinc-finger fold. The tract at residues 121 to 143 (GLANPATLTAGQPREAGEEEQDA) is disordered. The next 2 helical transmembrane spans lie at 157 to 177 (HLLL…PGVI) and 179 to 199 (WVLS…CSHP).

Interacts with BNIP1. Post-translationally, polyubiquitinated. 'Lys-29' autoubiquitination leads to proteasomal degradation.

The protein resides in the endoplasmic reticulum membrane. The catalysed reaction is S-ubiquitinyl-[E2 ubiquitin-conjugating enzyme]-L-cysteine + [acceptor protein]-L-lysine = [E2 ubiquitin-conjugating enzyme]-L-cysteine + N(6)-ubiquitinyl-[acceptor protein]-L-lysine.. Its pathway is protein modification; protein ubiquitination. In terms of biological role, E3 ubiquitin protein ligase that is part of an apoptotic signaling pathway activated by endoplasmic reticulum stress. Stimulates the expression of proteins specific of the unfolded protein response (UPR), ubiquitinates BNIP1 and regulates its localization to the mitochondrion and induces calcium release from the endoplasmic reticulum that ultimately leads to cell apoptosis. Plays a role in the maintenance of intestinal homeostasis and clearance of enteric pathogens. Upon NOD2 stimulation, ubiquitinates the ER stress sensor activating transcription factor 6/ATF6 and promotes the unfolded protein response UPR. Participates in basal level of autophagy maintenance by regulating the ubiquitination of EPHB2. Upon stimulation by ligand EFNB1, ubiquitinates EPHB2 and further recruits MAP1LC3B for autophagy induction. Controls nutrient sensing by ubiquitinating Sestrin-2/SESN2, which is an intracellular sensor of cytosolic leucine and inhibitor of mTORC1 activity. This chain is E3 ubiquitin-protein ligase RNF186, found in Bos taurus (Bovine).